The following is a 457-amino-acid chain: Multidrug resistance protein MdtK (457 aa).

A run of 12 helical transmembrane segments spans residues 11-31, 53-73, 93-113, 127-147, 160-180, 189-209, 243-263, 276-296, 314-334, 350-370, 387-407, and 418-438; these read LLAL…MGFV, IWLP…PVIA, WLAG…GYII, AVGY…FQVA, GMVM…IFIY, GGVG…LAMV, LPIA…ALLV, IALN…AAVT, AART…IFTV, VVTL…SDSI, IFYI…YILA, and PAGF…MMML.

It belongs to the multi antimicrobial extrusion (MATE) (TC 2.A.66.1) family. MdtK subfamily.

The protein resides in the cell inner membrane. Functionally, multidrug efflux pump that functions probably as a Na(+)/drug antiporter. The sequence is that of Multidrug resistance protein MdtK from Escherichia coli O17:K52:H18 (strain UMN026 / ExPEC).